Here is a 789-residue protein sequence, read N- to C-terminus: Phenylalanine--tRNA ligase beta subunit (789 aa).

The tRNA-binding domain maps to 39–149 (ADGLEAFRIA…HEAPVGQSYV (111 aa)). The B5 domain occupies 399–471 (SAVPVISYDP…RIEGLDNVPS (73 aa)). Residues D449, D455, and D459 each contribute to the Mg(2+) site. One can recognise an FDX-ACB domain in the interval 696–788 (SMLQPVFRDF…AAAKKGARLR (93 aa)).

The protein belongs to the phenylalanyl-tRNA synthetase beta subunit family. Type 1 subfamily. As to quaternary structure, tetramer of two alpha and two beta subunits. Requires Mg(2+) as cofactor.

It localises to the cytoplasm. It catalyses the reaction tRNA(Phe) + L-phenylalanine + ATP = L-phenylalanyl-tRNA(Phe) + AMP + diphosphate + H(+). This chain is Phenylalanine--tRNA ligase beta subunit, found in Zymomonas mobilis subsp. mobilis (strain ATCC 31821 / ZM4 / CP4).